The chain runs to 734 residues: MDRNDDSAPVQAAAEPAEHPGDEKSGKRNVPPALKLVENVVATGEKSPAPASVYDLFKKYHKGEKNGEENVNVNVGFDQLSSDEKSGFLRKLQMLTVGSKKKDGESSQSPAGRLLKKFVPSRRTTPTASASTAKTTSPSRFSVFGRSAKKVSESFSSQKPIHRKQSARRLQFTEKENPQPDAARNKVVAAMTREYEKLSKECAPVPINNKPARVQMQIPRGSLETPTDSPVKSFSSTTTSSSPEKEREKEKEKIEQPRYGTTQRQSVNSQQSSASWHGELPPRDYTSPTFSRKIFVGGVPWDITEAALKDSFGEFGSCAVEWPGQEARYRSGQSNVMPPNANLRAHSKYSGQATTGYVYMIFEDERAVAALLHECSQEIGGAGEWYFKIRAQRSKSTEIRQVQIIPWVTSDSLYCHEESILEVGIEPKRTVFVGALHGMMTAQVLHSIMEDCFGCVECVQLDTDKFKYPIGSGRVTFREHGAYFKAIEIGYLHVHTSKFRKRVQIDPFLESTSCMVCNLEPAHCFCRNRNCFKYYCHSCWSIDHGKDTVVDVHVPVIVPSSATKAYQGHASRHSHLSSNSPSKARDGQNSNNSQFSQLLSPAFPMIVGAPTPTLSALYGYIQNNHTMSPTVYDGPLTPPSSETMSKRGSREFSSNSNGGPVFISPAPVLSSQKLETPIPSYFANSTAILTPTSTYYGSPSTQQTYYAPNVYYGYMPQPIPYDGYVCPPPANYTQ.

Disordered stretches follow at residues 1–31 (MDRN…RNVP), 98–185 (GSKK…AARN), and 220–283 (RGSL…LPPR). Over residues 16–26 (PAEHPGDEKSG) the composition is skewed to basic and acidic residues. 2 stretches are compositionally biased toward low complexity: residues 121-140 (SRRT…SPSR) and 232-242 (KSFSSTTTSSS). Residues 243–256 (PEKEREKEKEKIEQ) show a composition bias toward basic and acidic residues. The segment covering 259–275 (YGTTQRQSVNSQQSSAS) has biased composition (polar residues). The 23-residue stretch at 294-316 (IFVGGVPWDITEAALKDSFGEFG) folds into the RRM domain. Disordered stretches follow at residues 564 to 593 (KAYQ…SNNS) and 630 to 657 (TVYD…SNSN). The span at 576-593 (LSSNSPSKARDGQNSNNS) shows a compositional bias: low complexity.

Cytoplasmic polyadenylation element binding protein that binds to and regulates the translation of specific mRNAs. This Caenorhabditis japonica protein is Cytoplasmic polyadenylation element-binding protein 3 (cpb-3).